The following is a 250-amino-acid chain: Sulfate transporter CysZ (250 aa).

Helical transmembrane passes span 26–46, 71–91, 150–170, and 211–231; these read LFVLLPLAINLVLFVGLIYLA, ILWPLFVVLVALMVFFTFTML, LFILSFIPVVNIVAAPLWLLF, and IVYLVLLIPVVNILMMPAAVA.

Belongs to the CysZ family.

The protein localises to the cell inner membrane. Functionally, high affinity, high specificity proton-dependent sulfate transporter, which mediates sulfate uptake. Provides the sulfur source for the cysteine synthesis pathway. The chain is Sulfate transporter CysZ from Pseudomonas fluorescens (strain Pf0-1).